Consider the following 23-residue polypeptide: Potassium channel toxin kappa-KTx 2.3 (23 aa).

2 disulfides stabilise this stretch: Cys4–Cys22 and Cys8–Cys18.

Belongs to the short scorpion toxin superfamily. Potassium channel inhibitor kappa-KTx family. Kappa-KTx 2 subfamily. Expressed by the venom gland.

Its subcellular location is the secreted. Functionally, decreases the amplitude of the potassium current of the rat channels Kv1.1/KCNA1 by 33% and Kv1.2/KCNA2 by 8% as well as human Kv1.3/KCNA3 by 70%. The sequence is that of Potassium channel toxin kappa-KTx 2.3 from Opisthacanthus madagascariensis (Scorpion).